We begin with the raw amino-acid sequence, 358 residues long: Tripartite motif-containing protein 54 (358 aa).

Residues 26–82 form an RING-type zinc finger; it reads CPICLEMFSKPVVILPCQHNLCRKCANDVFQASNPLWQSRGSTTVSSGGRFRCPSCR. The B box-type zinc-finger motif lies at 121–163; that stretch reads EQHLMCEEHEEEKINIYCLSCEVPTCSLCKVFGAHKDCEVAPL. Residues cysteine 126, histidine 129, cysteine 149, and histidine 155 each coordinate Zn(2+). The mediates microtubule-binding and homooligomerization stretch occupies residues 168 to 211; sequence KRQKSELSDGIAMLVAGNDRVQAVITQMEEVCQTIEDNSRRQKQ. Residues 220-258 adopt a coiled-coil conformation; sequence LCAVLEERKGELLQALAREQEEKLQRVRGLIRQYGDHLE. In terms of domain architecture, COS spans 271–329; that stretch reads MEEPQMALYLQQAKELINKVGAMSKVELAGRPEPGYESMEQFTVRVEHVAEMLRTIDFQ. The interval 326–358 is disordered; it reads IDFQPGASGEEEEVAPDGEEGSAGPEEERPDGP. Acidic residues predominate over residues 334-345; it reads GEEEEVAPDGEE.

In terms of assembly, homooligomer and heterooligomer. Interacts with tubulin. Interacts with TRIM63 and probably with TRIM55. As to expression, specifically expressed in heart and skeletal muscle.

It localises to the cytoplasm. The protein localises to the cytoskeleton. It is found in the myofibril. Its subcellular location is the sarcomere. The protein resides in the z line. May bind and stabilize microtubules during myotubes formation. The protein is Tripartite motif-containing protein 54 (TRIM54) of Homo sapiens (Human).